The sequence spans 248 residues: Gamma-glutamyl peptidase 2 (248 aa).

In terms of domain architecture, Glutamine amidotransferase type-1 spans 17–212; it reads SEFVKEMYGG…IDRVHKIKFV (196 aa). Cysteine 101 functions as the Nucleophile in the catalytic mechanism. Active-site residues include histidine 191 and glutamate 193.

The protein belongs to the peptidase C26 family.

Its subcellular location is the cytoplasm. The protein resides in the cytosol. It carries out the reaction an S-[(1E)-1-(hydroxyimino)-omega-(methylsulfanyl)alkyl]-L-glutathione + H2O = an S-[(1E)-1-(hydroxyimino)-omega-(methylsulfanyl)alkyl]-L-cysteinylglycine + L-glutamate. The catalysed reaction is (E)-1-(glutathione-S-yl)-2-(1H-indol-3-yl)acetohydroximate + H2O = (E)-1-(glycyl-L-cystein-S-yl)-2-(1H-indol-3-yl)acetohydroximate + L-glutamate. It catalyses the reaction 2-(glutathion-S-yl)-2-(1H-indol-3-yl)acetonitrile + H2O = 2-(glycyl-L-cystein-S-yl)-2-(1H-indol-3-yl)acetonitrile + L-glutamate. The enzyme catalyses (Z)-1-(glutathione-S-yl)-2-phenylacetohydroximate + H2O = (Z)-1-(glycyl-L-cystein-S-yl)-2-phenylacetohydroximate + L-glutamate. It participates in secondary metabolite biosynthesis. Involved in glucosinolate biosynthesis. Hydrolyzes the gamma-glutamyl peptide bond of several glutathione (GSH) conjugates to produce Cys-Gly conjugates related to glucosinolates. The gamma-Glu-Cys-Gly-GSH conjugates are the sulfur-donating molecule in glucosinolate biosynthesis. In Arabidopsis thaliana (Mouse-ear cress), this protein is Gamma-glutamyl peptidase 2.